Consider the following 149-residue polypeptide: Large ribosomal subunit protein bL9 (149 aa).

Belongs to the bacterial ribosomal protein bL9 family.

Its function is as follows. Binds to the 23S rRNA. The polypeptide is Large ribosomal subunit protein bL9 (Thermotoga petrophila (strain ATCC BAA-488 / DSM 13995 / JCM 10881 / RKU-1)).